The sequence spans 278 residues: MMIHIHQDKKMSTRSNKKSTKTEKVAKATKPVENVEVSDNEVQEQAVKTKASGKKVTAKSTKQSGGKNAKSGSKSAKSGSKSAKSGSKTSKTQSGGKGDESRDRYFKLIDAKTGRSFGRYTGGTPKQAASKGFTKMIHKIKAEGGALPKNGTMKIYLRESTRGSPRKVYAYEATRKQLTEPQKIEIEGSDGKKKVITYRYRNVIHKVSAPLPNQLGGLKTSRSNKKSGETKKSGSRSSGSKRSAKPTKSAKNAKSTGNKKVSTKSAGAKKAPAAKASR.

Residues 1-11 (MMIHIHQDKKM) show a composition bias toward basic and acidic residues. Disordered stretches follow at residues 1 to 107 (MMIH…RYFK) and 206 to 278 (KVSA…KASR). Residues 62-94 (KQSGGKNAKSGSKSAKSGSKSAKSGSKTSKTQS) are compositionally biased toward low complexity. The span at 97–107 (KGDESRDRYFK) shows a compositional bias: basic and acidic residues. The segment covering 249–260 (SAKNAKSTGNKK) has biased composition (polar residues). Positions 264-278 (KSAGAKKAPAAKASR) are enriched in low complexity.

This is an uncharacterized protein from Acanthamoeba polyphaga mimivirus (APMV).